The chain runs to 930 residues: Nonribosomal peptide synthetase acyN (930 aa).

Residues 15–436 (LDPQDNKISV…AGRAKETIIV (422 aa)) form an adenylation (A) domain region. In terms of domain architecture, Carrier spans 567–646 (APSNETEATI…GLAGTLETLM (80 aa)). O-(pantetheine 4'-phosphoryl)serine is present on Ser-604. Residues 665–914 (PLWLVHPGVG…HYTMLGPDNI (250 aa)) are thioesterase (TE) domain.

The protein belongs to the NRP synthetase family.

It carries out the reaction 2 3-phenylpyruvate + 2 ATP = polyporic acid + 2 AMP + 2 diphosphate + H(+). It functions in the pathway secondary metabolite biosynthesis. With respect to regulation, hydroxyphenylpyruvate acts more like a competitive inhibitor rather than a substrate. Functionally, nonribosomal peptide synthetase that mediates the biosynthesis of polyporic acid via the condensation of 2 phenylpyruvate units. Polyporic acid is further hydroxylaed by the cytochrome P450 monooxygenase MO6277 into less toxic ascocorynin. The protein is Nonribosomal peptide synthetase acyN of Ascocoryne sarcoides (Purple jellydisc fungus).